The primary structure comprises 398 residues: Stimulator of interferon genes protein (398 aa).

The Cytoplasmic segment spans residues 1-16 (MSVMGEDALVPRARSR). The helical transmembrane segment at 17-37 (LPVMCAAGLGFLTLAVAWLLD) threads the bilayer. Residues 38 to 44 (SDKFSER) lie on the Lumenal side of the membrane. A helical membrane pass occupies residues 45 to 65 (AGIIAFGLMLERFIYCICLLA). Topologically, residues 66–91 (EELLFHSRQRYHGRMSEIFRACFRGS) are cytoplasmic. Residues 92-112 (GILGMCAIFLMLMLGGVSFSV) form a helical membrane-spanning segment. The Lumenal portion of the chain corresponds to 113–120 (KQWSHFNL). The helical transmembrane segment at 121-141 (MCAGYMLLNSLGVLGPAPVEI) threads the bilayer. The Cytoplasmic portion of the chain corresponds to 142–398 (SEICEAKKMN…FNPSSAMKQN (257 aa)). The segment at 150 to 331 (MNVAHGLAWS…QNLKQQDGEI (182 aa)) is cyclic dinucleotide-binding domain (CBD). 2',3'-cGAMP-binding residues include Ser159, Tyr164, Arg230, and Thr254. 3',3'-c-di-GMP contacts are provided by residues Ser159, Tyr164, 230–233 (RSYT), and Thr254. The interval 375–398 (PQSLRSEPVETTDYFNPSSAMKQN) is disordered. Positions 387–398 (DYFNPSSAMKQN) are enriched in polar residues.

It belongs to the STING family. In terms of assembly, homodimer; forms a homodimer in absence of cyclic nucleotide (c-di-GMP or cGAMP). Homotetramer; in presence of cyclic nucleotide (c-di-GMP or cGAMP), forms tetramers and higher-order oligomers through side-by-side packing. Interacts (when phosphorylated) with irf3; following activation and phosphorylation by tbk1, recruits irf3. In terms of processing, phosphorylation by TBK1 leads to activation and production of IFN-beta. Following cyclic nucleotide (c-di-GMP or cGAMP)-binding, activation and translocation from the endoplasmic reticulum, STING1 is phosphorylated by tbk1, leading to recruitment of the transcription factor irf3 to induce type-I interferons and other cytokines.

Its subcellular location is the endoplasmic reticulum membrane. It is found in the cytoplasm. The protein localises to the perinuclear region. It localises to the endoplasmic reticulum-Golgi intermediate compartment membrane. The protein resides in the golgi apparatus membrane. Its subcellular location is the cytoplasmic vesicle. It is found in the autophagosome membrane. It carries out the reaction H(+)(in) = H(+)(out). Functionally, facilitator of innate immune signaling that acts as a sensor of cytosolic DNA from bacteria and viruses and promotes the production of type I interferon (IFN-alpha and IFN-beta). Innate immune response is triggered in response to non-CpG double-stranded DNA from viruses and bacteria delivered to the cytoplasm. Acts by binding cyclic dinucleotides: recognizes and binds cyclic di-GMP (c-di-GMP), a second messenger produced by bacteria, and cyclic GMP-AMP (cGAMP), a messenger produced by CGAS in response to DNA virus in the cytosol. Upon binding of c-di-GMP or cGAMP, STING1 oligomerizes and is able to activate both NF-kappa-B and irf3 transcription pathways to induce expression of type I interferon and exert a potent anti-viral state. Exhibits 2',3' phosphodiester linkage-specific ligand recognition: can bind both 2'-3' linked cGAMP and 3'-3' linked cGAMP but is preferentially activated by 2'-3' linked cGAMP. In addition to promote the production of type I interferons, plays a direct role in autophagy. Following cGAMP-binding, STING1 buds from the endoplasmic reticulum into COPII vesicles, which then form the endoplasmic reticulum-Golgi intermediate compartment (ERGIC). The ERGIC serves as the membrane source for LC3 lipidation, leading to formation of autophagosomes that target cytosolic DNA or DNA viruses for degradation by the lysosome. Promotes autophagy by acting as a proton channel that directs proton efflux from the Golgi to facilitate LC3 lipidation. The autophagy- and interferon-inducing activities can be uncoupled and autophagy induction is independent of TBK1 phosphorylation. The sequence is that of Stimulator of interferon genes protein from Danio rerio (Zebrafish).